The sequence spans 385 residues: Glucans biosynthesis protein C (385 aa).

Transmembrane regions (helical) follow at residues 17 to 37, 60 to 80, 91 to 111, 137 to 157, 173 to 193, 212 to 232, 239 to 259, 274 to 294, 311 to 331, and 338 to 358; these read AWLM…SHTW, MQVF…RYPL, VGIP…IMLQ, ISHL…VWIF, KFSM…YAVI, FIVM…LAFI, LFTT…VAYL, TESV…FSFG, ASLF…AYIT, and WLGF…LYEI.

This sequence belongs to the acyltransferase 3 family. OpgC subfamily.

It localises to the cell membrane. It participates in glycan metabolism; osmoregulated periplasmic glucan (OPG) biosynthesis. In terms of biological role, necessary for the succinyl substitution of periplasmic glucans. Could catalyze the transfer of succinyl residues from the cytoplasmic side of the membrane to the nascent glucan backbones on the periplasmic side of the membrane. The sequence is that of Glucans biosynthesis protein C from Escherichia coli O17:K52:H18 (strain UMN026 / ExPEC).